A 30-amino-acid polypeptide reads, in one-letter code: Protein Tat (30 aa).

The interval 1-30 (PLPTTRGNPTGPKESKKEVESKTETDPFAW) is disordered. A Cell attachment site motif is present at residues 6-8 (RGN). The span at 13–30 (KESKKEVESKTETDPFAW) shows a compositional bias: basic and acidic residues.

Belongs to the lentiviruses Tat family. Interacts with host CCNT1. Associates with the P-TEFb complex composed at least of Tat, P-TEFb (CDK9 and CCNT1), TAR RNA, RNA Pol II. Recruits the HATs CREBBP, TAF1/TFIID, EP300, PCAF and GCN5L2. Interacts with host KAT5/Tip60; this interaction targets the latter to degradation. Interacts with the host deacetylase SIRT1. Interacts with host capping enzyme RNGTT; this interaction stimulates RNGTT. Binds to host KDR, and to the host integrins ITGAV/ITGB3 and ITGA5/ITGB1. Interacts with host KPNB1/importin beta-1 without previous binding to KPNA1/importin alpha-1. Interacts with EIF2AK2. Interacts with host nucleosome assembly protein NAP1L1; this interaction may be required for the transport of Tat within the nucleus, since the two proteins interact at the nuclear rim. Interacts with host C1QBP/SF2P32; this interaction involves lysine-acetylated Tat. Interacts with the host chemokine receptors CCR2, CCR3 and CXCR4. Interacts with host DPP4/CD26; this interaction may trigger an anti-proliferative effect. Interacts with host LDLR. Interacts with the host extracellular matrix metalloproteinase MMP1. Interacts with host PRMT6; this interaction mediates Tat's methylation. Interacts with, and is ubiquitinated by MDM2/Hdm2. Interacts with host PSMC3 and HTATIP2. Interacts with STAB1; this interaction may overcome SATB1-mediated repression of IL2 and IL2RA (interleukin) in T cells by binding to the same domain than HDAC1. Interacts (when acetylated on Lys-50 and Lys-51) with human CDK13, thereby increasing HIV-1 mRNA splicing and promoting the production of the doubly spliced HIV-1 protein Nef. Acetylation by EP300, CREBBP, GCN5L2/GCN5 and PCAF regulates the transactivation activity of Tat. EP300-mediated acetylation of Lys-50 promotes dissociation of Tat from the TAR RNA through the competitive binding to PCAF's bromodomain. In addition, the non-acetylated Tat's N-terminus can also interact with PCAF. PCAF-mediated acetylation of Lys-28 enhances Tat's binding to CCNT1. Lys-50 is deacetylated by SIRT1. Post-translationally, phosphorylated by EIF2AK2 on serine and threonine residues adjacent to the basic region important for TAR RNA binding and function. Phosphorylation of Tat by EIF2AK2 is dependent on the prior activation of EIF2AK2 by dsRNA. In terms of processing, asymmetrical arginine methylation by host PRMT6 seems to diminish the transactivation capacity of Tat and affects the interaction with host CCNT1. Polyubiquitination by MDM2 does not target Tat to degradation, but activates its transactivation function and fosters interaction with CCNT1 and TAR RNA.

It localises to the host nucleus. Its subcellular location is the host nucleolus. The protein resides in the host cytoplasm. It is found in the secreted. Transcriptional activator that increases RNA Pol II processivity, thereby increasing the level of full-length viral transcripts. Recognizes a hairpin structure at the 5'-LTR of the nascent viral mRNAs referred to as the transactivation responsive RNA element (TAR) and recruits the cyclin T1-CDK9 complex (P-TEFb complex) that will in turn hyperphosphorylate the RNA polymerase II to allow efficient elongation. The CDK9 component of P-TEFb and other Tat-activated kinases hyperphosphorylate the C-terminus of RNA Pol II that becomes stabilized and much more processive. Other factors such as HTATSF1/Tat-SF1, SUPT5H/SPT5, and HTATIP2 are also important for Tat's function. Besides its effect on RNA Pol II processivity, Tat induces chromatin remodeling of proviral genes by recruiting the histone acetyltransferases (HATs) CREBBP, EP300 and PCAF to the chromatin. This also contributes to the increase in proviral transcription rate, especially when the provirus integrates in transcriptionally silent region of the host genome. To ensure maximal activation of the LTR, Tat mediates nuclear translocation of NF-kappa-B by interacting with host RELA. Through its interaction with host TBP, Tat may also modulate transcription initiation. Tat can reactivate a latently infected cell by penetrating in it and transactivating its LTR promoter. In the cytoplasm, Tat is thought to act as a translational activator of HIV-1 mRNAs. Functionally, extracellular circulating Tat can be endocytosed by surrounding uninfected cells via the binding to several surface receptors such as CD26, CXCR4, heparan sulfate proteoglycans (HSPG) or LDLR. Neurons are rarely infected, but they internalize Tat via their LDLR. Endosomal low pH allows Tat to cross the endosome membrane to enter the cytosol and eventually further translocate into the nucleus, thereby inducing severe cell dysfunctions ranging from cell activation to cell death. Through its interaction with nuclear HATs, Tat is potentially able to control the acetylation-dependent cellular gene expression. Tat seems to inhibit the HAT activity of KAT5/Tip60 and TAF1, and consequently modify the expression of specific cellular genes. Modulates the expression of many cellular genes involved in cell survival, proliferation or in coding for cytokines (such as IL10) or cytokine receptors. May be involved in the derepression of host interleukin IL2 expression. Mediates the activation of cyclin-dependent kinases and dysregulation of microtubule network. Tat plays a role in T-cell and neurons apoptosis. Tat induced neurotoxicity and apoptosis probably contribute to neuroAIDS. Host extracellular matrix metalloproteinase MMP1 cleaves Tat and decreases Tat's mediated neurotoxicity. Circulating Tat also acts as a chemokine-like and/or growth factor-like molecule that binds to specific receptors on the surface of the cells, affecting many cellular pathways. In the vascular system, Tat binds to ITGAV/ITGB3 and ITGA5/ITGB1 integrins dimers at the surface of endothelial cells and competes with bFGF for heparin-binding sites, leading to an excess of soluble bFGF. Binds to KDR/VEGFR-2. All these Tat-mediated effects enhance angiogenesis in Kaposi's sarcoma lesions. This Human immunodeficiency virus type 1 group M subtype A (isolate Z321) (HIV-1) protein is Protein Tat.